A 319-amino-acid polypeptide reads, in one-letter code: GATA transcription factor 18 (319 aa).

Positions 1 to 15 (MPDAAAAAAAAQDAD) are enriched in low complexity. The segment at 1–74 (MPDAAAAAAA…AAPEPVSALL (74 aa)) is disordered. The span at 31–60 (DNDDDDGDDGTEEDEEEDDDEEGDEEELPP) shows a compositional bias: acidic residues. The region spanning 74–109 (LPGSPNQLTLLFQGEVYVFESVTPEKVQAVLLLLGR) is the Tify domain. The CCT domain occupies 143–185 (RVASLIRFREKRKERNFDKKIRYAVRKEVALRMQRRKGQFAGR). The segment at 215-242 (CQNCGTSEKMTPAMRRGPAGPRTLCNAC) adopts a GATA-type zinc-finger fold. Residues 292–319 (ITASHGEVMGDSTPANEAEIGAPKAQSQ) are disordered.

The protein belongs to the type IV zinc-finger family. Class C subfamily.

Its subcellular location is the nucleus. Its function is as follows. Transcriptional activator that specifically binds 5'-GATA-3' or 5'-GAT-3' motifs within gene promoters. The sequence is that of GATA transcription factor 18 from Oryza sativa subsp. japonica (Rice).